Consider the following 296-residue polypeptide: Protein csh3 (296 aa).

The disordered stretch occupies residues 46–138 (ASPVTAPAAQ…PPSYPGPNTA (93 aa)). A compositionally biased stretch (basic and acidic residues) spans 93–103 (GEKRTPEEPRK). Over residues 111–124 (QKQSEASSVNSSTE) the composition is skewed to polar residues. One can recognise an SH3 domain in the interval 140–199 (KNVERVLAMYDFPGPDAGDLGFHAGEVIIVLEHVNNDWWRGELNGKEGIFPSNYVRLLED). The interval 202-246 (VKAQPPPPPPQQNYPPAASSSAPPMQYQQTAYPPQQAPYPPVQAY) is disordered. A compositionally biased stretch (pro residues) spans 205–214 (QPPPPPPQQN). Over residues 215–235 (YPPAASSSAPPMQYQQTAYPP) the composition is skewed to low complexity.

The protein is Protein csh3 (csh3) of Schizosaccharomyces pombe (strain 972 / ATCC 24843) (Fission yeast).